A 1488-amino-acid chain; its full sequence is Eukaryotic translation initiation factor 4G (1488 aa).

Disordered stretches follow at residues 196 to 320, 337 to 367, and 415 to 707; these read VQHR…GQTS, DSEK…GKSE, and THQI…MTEA. Basic and acidic residues-rich tracts occupy residues 216-244 and 274-299; these read VSEK…EKHP and ADEK…RNDT. Composition is skewed to polar residues over residues 300–310, 345–360, 448–464, and 473–495; these read KNLPQQPQSAS, SKVS…SSIS, SLAT…SFVT, and CTTS…TQTL. Positions 496 to 520 are enriched in low complexity; it reads SASVDASDVSEVNSGTSSESTSQST. Positions 555-566 are enriched in basic and acidic residues; the sequence is QVKHADGAKDES. A compositionally biased stretch (polar residues) spans 627–646; that stretch reads QEQSESVATSDGADSSSTVD. The span at 651–671 shows a compositional bias: basic and acidic residues; sequence LPEESEREVMCEDDGKKKVEP. Over residues 683–696 the composition is skewed to polar residues; the sequence is PKLQSSDSGNQASA. Residues 709-721 form an EIF4E-binding region; sequence GRKKYSRDFLLTF. Positions 753–784 are enriched in basic and acidic residues; that stretch reads DREPHPSSARGSDRPTSRGDRRGPAMDDDKWL. Disordered regions lie at residues 753–795, 974–1000, and 1107–1299; these read DREP…PNRD, RGER…EREE, and WQQR…SEEE. An MIF4G domain is found at 883 to 1106; the sequence is QRQLKAILNK…RDSIDLRKNK (224 aa). Residues 978-989 are compositionally biased toward acidic residues; it reads EEAEADKTEEEG. Composition is skewed to basic and acidic residues over residues 990-1000, 1111-1132, 1181-1191, and 1254-1267; these read EIKQTKEEREE, RKVD…ERHA, IRYEQERHQFD, and TRED…DRFS. The segment covering 1273–1294 has biased composition (polar residues); sequence AAQSASSSHRPASQEGRSGNKS. The MI domain occupies 1299–1423; it reads ELREKSIATI…VLQDVGKLIE (125 aa).

Belongs to the eukaryotic initiation factor 4G family. In terms of assembly, EIF4F is a multi-subunit complex, the composition of which varies with external and internal environmental conditions. It is composed of at least EIF4A, EIF4E and EIF4G. In higher plants two isoforms of EIF4F have been identified, named isoform EIF4F and isoform EIF(iso)4F. Isoform EIF4F has subunits p220 and p26, whereas isoform EIF(iso)4F has subunits p82 and p28.

Component of the protein complex eIF4F, which is involved in the recognition of the mRNA cap, ATP-dependent unwinding of 5'-terminal secondary structure and recruitment of mRNA to the ribosome. This chain is Eukaryotic translation initiation factor 4G, found in Triticum aestivum (Wheat).